The primary structure comprises 251 residues: CDP-diacylglycerol pyrophosphatase (251 aa).

A helical transmembrane segment spans residues 4–24 (AGLLFLVMIVIAVVAAGIGYW).

Belongs to the Cdh family.

It is found in the cell inner membrane. It carries out the reaction a CDP-1,2-diacyl-sn-glycerol + H2O = a 1,2-diacyl-sn-glycero-3-phosphate + CMP + 2 H(+). Its pathway is phospholipid metabolism; CDP-diacylglycerol degradation; phosphatidate from CDP-diacylglycerol: step 1/1. The sequence is that of CDP-diacylglycerol pyrophosphatase from Escherichia coli O81 (strain ED1a).